The following is a 665-amino-acid chain: DNA ligase (665 aa).

NAD(+)-binding positions include 34–38 (DEEYD), 83–84 (SL), and Glu-114. Residue Lys-116 is the N6-AMP-lysine intermediate of the active site. NAD(+) is bound by residues Arg-137, Glu-171, Lys-287, and Lys-311. Cys-405, Cys-408, Cys-424, and Cys-429 together coordinate Zn(2+). The 79-residue stretch at 587-665 (KKSSKLAGLT…EDEFKKMIID (79 aa)) folds into the BRCT domain.

This sequence belongs to the NAD-dependent DNA ligase family. LigA subfamily. It depends on Mg(2+) as a cofactor. Requires Mn(2+) as cofactor.

It carries out the reaction NAD(+) + (deoxyribonucleotide)n-3'-hydroxyl + 5'-phospho-(deoxyribonucleotide)m = (deoxyribonucleotide)n+m + AMP + beta-nicotinamide D-nucleotide.. Functionally, DNA ligase that catalyzes the formation of phosphodiester linkages between 5'-phosphoryl and 3'-hydroxyl groups in double-stranded DNA using NAD as a coenzyme and as the energy source for the reaction. It is essential for DNA replication and repair of damaged DNA. This Thermosipho africanus (strain TCF52B) protein is DNA ligase.